Reading from the N-terminus, the 432-residue chain is Protein RETICULATA, chloroplastic (432 aa).

The transit peptide at 1-47 (MAGCAMNLQFSSVVKVRNEISSFGICNRDFVFRDLAKAMKVPVLRIR) directs the protein to the chloroplast. A disordered region spans residues 109 to 140 (GNVGDGFNGSDGNGGGGGGGNGGEGDGEGEDY). Residues 111 to 132 (VGDGFNGSDGNGGGGGGGNGGE) show a composition bias toward gly residues. 2 consecutive transmembrane segments (helical) span residues 249–269 (LYVA…GMLA) and 322–342 (IMYG…ANLI).

The protein belongs to the RETICULATA family. Highly expressed in the vasculature of developing leaf primordia, margins of fully expanded leaves, hydathodes of rosette of cauline leaves, basal region of the lamina, stipules, root tips, stamens and in the abscission zone of the funiculus.

The protein localises to the plastid. It is found in the chloroplast membrane. Functionally, may play a role in leaf development. Required for leaf mesophyll cell division in the early stages of leaf organogenesis. Acts in a developmental pathway that involves PPT1/CUE1 but does not include ASE2/DOV1. This chain is Protein RETICULATA, chloroplastic, found in Arabidopsis thaliana (Mouse-ear cress).